The following is a 130-amino-acid chain: RutC family protein in leuC 5'region (130 aa).

Belongs to the RutC family.

In Leuconostoc mesenteroides subsp. cremoris, this protein is RutC family protein in leuC 5'region.